The sequence spans 906 residues: Protein translocase subunit SecA (906 aa).

ATP contacts are provided by residues glutamine 87, 105–109 (GEGKT), and aspartate 513. The segment at 860-906 (QVNKGEVVSDENTGDDTFVRNEKKVGRNEPCPCGSGKKYKQCHGKLD) is disordered. Positions 876–886 (TFVRNEKKVGR) are enriched in basic and acidic residues. The Zn(2+) site is built by cysteine 890, cysteine 892, cysteine 901, and histidine 902. Residues 896 to 906 (KKYKQCHGKLD) show a composition bias toward basic residues.

It belongs to the SecA family. Monomer and homodimer. Part of the essential Sec protein translocation apparatus which comprises SecA, SecYEG and auxiliary proteins SecDF-YajC and YidC. The cofactor is Zn(2+).

Its subcellular location is the cell inner membrane. It is found in the cytoplasm. The catalysed reaction is ATP + H2O + cellular proteinSide 1 = ADP + phosphate + cellular proteinSide 2.. Functionally, part of the Sec protein translocase complex. Interacts with the SecYEG preprotein conducting channel. Has a central role in coupling the hydrolysis of ATP to the transfer of proteins into and across the cell membrane, serving both as a receptor for the preprotein-SecB complex and as an ATP-driven molecular motor driving the stepwise translocation of polypeptide chains across the membrane. The sequence is that of Protein translocase subunit SecA from Psychromonas ingrahamii (strain DSM 17664 / CCUG 51855 / 37).